The primary structure comprises 392 residues: Putative nickel insertion protein (392 aa).

The protein belongs to the LarC family.

The protein is Putative nickel insertion protein of Pelobacter propionicus (strain DSM 2379 / NBRC 103807 / OttBd1).